The chain runs to 205 residues: Cytochrome c biogenesis ATP-binding export protein CcmA (205 aa).

The ABC transporter domain maps to 2-204 (LEVSNLTAIR…SPKLRKIKLG (203 aa)). 34–41 (GRNGTGKT) contacts ATP.

Belongs to the ABC transporter superfamily. CcmA exporter (TC 3.A.1.107) family. In terms of assembly, the complex is composed of two ATP-binding proteins (CcmA) and two transmembrane proteins (CcmB).

The protein resides in the cell inner membrane. The enzyme catalyses heme b(in) + ATP + H2O = heme b(out) + ADP + phosphate + H(+). Functionally, part of the ABC transporter complex CcmAB involved in the biogenesis of c-type cytochromes; once thought to export heme, this seems not to be the case, but its exact role is uncertain. Responsible for energy coupling to the transport system. This is Cytochrome c biogenesis ATP-binding export protein CcmA from Vibrio vulnificus (strain YJ016).